The chain runs to 294 residues: Protoheme IX farnesyltransferase (294 aa).

A run of 9 helical transmembrane segments spans residues 24–44 (VVLL…PGWV), 48–68 (LIAF…AINH), 96–116 (ALWF…LFVN), 118–138 (LTAL…TGYL), 145–165 (NIVI…TAVT), 172–192 (ALLL…ALAI), 211–231 (GIQF…VVSL), 241–263 (WIYL…KLYF), and 268–288 (VVAM…FVFL).

It belongs to the UbiA prenyltransferase family. Protoheme IX farnesyltransferase subfamily.

The protein localises to the cell inner membrane. It carries out the reaction heme b + (2E,6E)-farnesyl diphosphate + H2O = Fe(II)-heme o + diphosphate. It functions in the pathway porphyrin-containing compound metabolism; heme O biosynthesis; heme O from protoheme: step 1/1. Its function is as follows. Converts heme B (protoheme IX) to heme O by substitution of the vinyl group on carbon 2 of heme B porphyrin ring with a hydroxyethyl farnesyl side group. This Legionella pneumophila (strain Lens) protein is Protoheme IX farnesyltransferase.